Reading from the N-terminus, the 229-residue chain is Urease accessory protein UreF (229 aa).

This sequence belongs to the UreF family. UreD, UreF and UreG form a complex that acts as a GTP-hydrolysis-dependent molecular chaperone, activating the urease apoprotein by helping to assemble the nickel containing metallocenter of UreC. The UreE protein probably delivers the nickel.

The protein resides in the cytoplasm. Its function is as follows. Required for maturation of urease via the functional incorporation of the urease nickel metallocenter. The protein is Urease accessory protein UreF of Ralstonia pickettii (strain 12J).